The primary structure comprises 218 residues: Chymotrypsin-2 (218 aa).

The Peptidase S1 domain occupies 1–218; sequence IVGGTDAPRG…FLDWIQKNQL (218 aa). Residues cysteine 25 and cysteine 40 are joined by a disulfide bond. Residues histidine 39 and aspartate 84 each act as charge relay system in the active site. Cystine bridges form between cysteine 148–cysteine 161 and cysteine 171–cysteine 195. Serine 175 acts as the Charge relay system in catalysis.

Belongs to the peptidase S1 family.

Its subcellular location is the secreted. The protein localises to the extracellular space. The catalysed reaction is Preferential cleavage: Tyr-|-Xaa, Trp-|-Xaa, Phe-|-Xaa, Leu-|-Xaa.. This is Chymotrypsin-2 from Vespa crabro (European hornet).